The following is a 257-amino-acid chain: Snake venom serine protease KN2 (257 aa).

The N-terminal stretch at 1-18 (MVLIRVLANLLILQLSYA) is a signal peptide. Positions 19–24 (QKSSEL) are excised as a propeptide. Positions 25–248 (VIGGHPCNIN…HLDWIKSIIA (224 aa)) constitute a Peptidase S1 domain. Cystine bridges form between Cys31-Cys162, Cys49-Cys65, Cys97-Cys255, Cys141-Cys209, Cys173-Cys188, and Cys199-Cys224. Catalysis depends on charge relay system residues His64 and Asp109. N-linked (GlcNAc...) asparagine glycosylation is found at Asn120 and Asn121. Ser203 functions as the Charge relay system in the catalytic mechanism.

It belongs to the peptidase S1 family. Snake venom subfamily. In terms of assembly, monomer. In terms of tissue distribution, expressed by the venom gland.

It localises to the secreted. In terms of biological role, snake venom serine protease that may act in the hemostasis system of the prey. This Trimeresurus stejnegeri (Chinese green tree viper) protein is Snake venom serine protease KN2.